The sequence spans 284 residues: MHNYTSDSDEEIKLEFTDNGKSYTKVYHIPYRTNHSNEKKLICFSIINGENCIYGPNCTYAHSLSEQIIEEDKKFIYRIILDENLMGFSSISESNEKGCINESNKNMSDRKIEEIYKKLLNLTHICEKCTSNKCTGGYNCRNGVFDSSLKICKNDLLTGECLNKLVNIKVDEIIVDKLNSNQTESFKSCQSYQGCINGHHLTLRNIIPYYKYVHQKENSRKYQYQSVRYIDIDQLGKLFCNNNVGSNTYCYQNESDDTESSTDEEISSWFRKDEFEFSDSDNTV.

Residues 37-65 (NEKKLICFSIINGENCIYGPNCTYAHSLS) form a C3H1-type zinc finger.

This is an uncharacterized protein from Acanthamoeba polyphaga (Amoeba).